Here is a 563-residue protein sequence, read N- to C-terminus: Methylcrotonoyl-CoA carboxylase beta chain, mitochondrial (563 aa).

A mitochondrion-targeting transit peptide spans 1 to 22 (MWAVLRLALRPCARASPAGPRA). One can recognise a CoA carboxyltransferase N-terminal domain in the interval 49 to 306 (MKALVNQLHE…QKKLDVTIEP (258 aa)). Residues 49-555 (MKALVNQLHE…SAALNAPIEK (507 aa)) form a carboxyltransferase region. Lys70 carries the N6-acetyllysine; alternate modification. Lys70 carries the post-translational modification N6-succinyllysine; alternate. Lys141 is modified (N6-succinyllysine). Positions 309–555 (EPLFPADELY…SAALNAPIEK (247 aa)) constitute a CoA carboxyltransferase C-terminal domain. The acyl-CoA binding stretch occupies residues 343 to 372 (RFTEFKAFYGDTLVTGFARIFGYPVGIVGN). N6-acetyllysine; alternate is present on Lys495. N6-succinyllysine; alternate is present on Lys495. Position 511 is an N6-acetyllysine (Lys511).

It belongs to the AccD/PCCB family. As to quaternary structure, probably a dodecamer composed of six biotin-containing alpha subunits (MCCC1) and six beta (MCCC2) subunits.

Its subcellular location is the mitochondrion matrix. It catalyses the reaction 3-methylbut-2-enoyl-CoA + hydrogencarbonate + ATP = 3-methyl-(2E)-glutaconyl-CoA + ADP + phosphate + H(+). It functions in the pathway amino-acid degradation; L-leucine degradation; (S)-3-hydroxy-3-methylglutaryl-CoA from 3-isovaleryl-CoA: step 2/3. Functionally, carboxyltransferase subunit of the 3-methylcrotonyl-CoA carboxylase, an enzyme that catalyzes the conversion of 3-methylcrotonyl-CoA to 3-methylglutaconyl-CoA, a critical step for leucine and isovaleric acid catabolism. The polypeptide is Methylcrotonoyl-CoA carboxylase beta chain, mitochondrial (MCCC2) (Homo sapiens (Human)).